We begin with the raw amino-acid sequence, 118 residues long: Large ribosomal subunit protein bL20 (118 aa).

The protein belongs to the bacterial ribosomal protein bL20 family.

Binds directly to 23S ribosomal RNA and is necessary for the in vitro assembly process of the 50S ribosomal subunit. It is not involved in the protein synthesizing functions of that subunit. The sequence is that of Large ribosomal subunit protein bL20 from Aliarcobacter butzleri (strain RM4018) (Arcobacter butzleri).